Here is a 1021-residue protein sequence, read N- to C-terminus: Disease resistance protein Pikm2-TS (1021 aa).

The segment at Met-1–Val-182 is structured coiled coil (CC) domain. Residues Thr-186–Lys-519 form the NB-ARC domain. The segment at Pro-297–Asp-317 is disordered. 3 LRR repeats span residues Leu-612–Tyr-634, Met-659–Leu-682, and Glu-683–Leu-705. The tract at residues Arg-719–Leu-751 is disordered. LRR repeat units lie at residues Leu-785–Gln-807, Ser-817–Ala-841, Pro-843–Ile-865, Thr-866–Ile-888, Lys-912–Ser-935, and Met-957–Asn-981.

It belongs to the disease resistance NB-LRR family. Constitutively expressed.

Functionally, disease resistance (R) protein. Resistance proteins guard the plant against pathogens that contain an appropriate avirulence protein via an indirect interaction with this avirulence protein. That triggers a defense system including the hypersensitive response, which restricts the pathogen growth. Contribution of Pikm-1 is required to recognize the effector avirulence protein AVR-Pik. The protein is Disease resistance protein Pikm2-TS of Oryza sativa subsp. japonica (Rice).